Consider the following 379-residue polypeptide: UDP-4-amino-4-deoxy-L-arabinose--oxoglutarate aminotransferase (379 aa).

Residue Lys182 is modified to N6-(pyridoxal phosphate)lysine.

Belongs to the DegT/DnrJ/EryC1 family. ArnB subfamily. As to quaternary structure, homodimer. Requires pyridoxal 5'-phosphate as cofactor.

The catalysed reaction is UDP-4-amino-4-deoxy-beta-L-arabinose + 2-oxoglutarate = UDP-beta-L-threo-pentopyranos-4-ulose + L-glutamate. The protein operates within nucleotide-sugar biosynthesis; UDP-4-deoxy-4-formamido-beta-L-arabinose biosynthesis; UDP-4-deoxy-4-formamido-beta-L-arabinose from UDP-alpha-D-glucuronate: step 2/3. Its pathway is bacterial outer membrane biogenesis; lipopolysaccharide biosynthesis. Catalyzes the conversion of UDP-4-keto-arabinose (UDP-Ara4O) to UDP-4-amino-4-deoxy-L-arabinose (UDP-L-Ara4N). The modified arabinose is attached to lipid A and is required for resistance to polymyxin and cationic antimicrobial peptides. The sequence is that of UDP-4-amino-4-deoxy-L-arabinose--oxoglutarate aminotransferase from Klebsiella pneumoniae (strain 342).